Here is a 213-residue protein sequence, read N- to C-terminus: Penicillin-binding protein activator LpoB (213 aa).

Residues 1 to 19 (MMKMNRYALVAALAIFLSG) form the signal peptide. Residue cysteine 20 is the site of N-palmitoyl cysteine attachment. Cysteine 20 is lipidated: S-diacylglycerol cysteine. Residues 26–71 (PAPVDEVKPAPEQPAEPQQPVPVVPSVPTIPQQPGPIEHEDQTAQP) are disordered. The segment covering 36–50 (PEQPAEPQQPVPVVP) has biased composition (pro residues).

This sequence belongs to the LpoB family. Interacts with PBP1b.

It is found in the cell outer membrane. In terms of biological role, regulator of peptidoglycan synthesis that is essential for the function of penicillin-binding protein 1B (PBP1b). The polypeptide is Penicillin-binding protein activator LpoB (Citrobacter koseri (strain ATCC BAA-895 / CDC 4225-83 / SGSC4696)).